The sequence spans 239 residues: 1-(5-phosphoribosyl)-5-[(5-phosphoribosylamino)methylideneamino] imidazole-4-carboxamide isomerase (239 aa).

The active-site Proton acceptor is D9. D131 (proton donor) is an active-site residue.

This sequence belongs to the HisA/HisF family.

It localises to the cytoplasm. The enzyme catalyses 1-(5-phospho-beta-D-ribosyl)-5-[(5-phospho-beta-D-ribosylamino)methylideneamino]imidazole-4-carboxamide = 5-[(5-phospho-1-deoxy-D-ribulos-1-ylimino)methylamino]-1-(5-phospho-beta-D-ribosyl)imidazole-4-carboxamide. Its pathway is amino-acid biosynthesis; L-histidine biosynthesis; L-histidine from 5-phospho-alpha-D-ribose 1-diphosphate: step 4/9. In Bacteroides thetaiotaomicron (strain ATCC 29148 / DSM 2079 / JCM 5827 / CCUG 10774 / NCTC 10582 / VPI-5482 / E50), this protein is 1-(5-phosphoribosyl)-5-[(5-phosphoribosylamino)methylideneamino] imidazole-4-carboxamide isomerase.